Reading from the N-terminus, the 515-residue chain is Pescadillo homolog (515 aa).

A coiled-coil region spans residues 270–327 (EVLAALNHTLKIIQTQEEDLEVDEFPIDPNSEDAEAIQAQKEEETKLERLKNLFSECK). A BRCT domain is found at 318–411 (RLKNLFSECK…KLLPVEEYFP (94 aa)). The tract at residues 477 to 515 (RLYEKIMHSKKKKRSEVRKLESKRKVHDEEKAKKKLKSS) is disordered. The span at 484 to 501 (HSKKKKRSEVRKLESKRK) shows a compositional bias: basic residues.

This sequence belongs to the pescadillo family.

Its subcellular location is the nucleus. It localises to the nucleolus. The protein resides in the nucleoplasm. Its function is as follows. Required for maturation of ribosomal RNAs and formation of the large ribosomal subunit. The polypeptide is Pescadillo homolog (Nematostella vectensis (Starlet sea anemone)).